We begin with the raw amino-acid sequence, 321 residues long: tRNA-dihydrouridine synthase B (321 aa).

Residues 16 to 18 (PMA) and glutamine 70 each bind FMN. Cysteine 100 serves as the catalytic Proton donor. Residues lysine 139, 200–202 (NGD), and 224–225 (GR) contribute to the FMN site.

The protein belongs to the Dus family. DusB subfamily. Requires FMN as cofactor.

It catalyses the reaction a 5,6-dihydrouridine in tRNA + NAD(+) = a uridine in tRNA + NADH + H(+). It carries out the reaction a 5,6-dihydrouridine in tRNA + NADP(+) = a uridine in tRNA + NADPH + H(+). Catalyzes the synthesis of 5,6-dihydrouridine (D), a modified base found in the D-loop of most tRNAs, via the reduction of the C5-C6 double bond in target uridines. The sequence is that of tRNA-dihydrouridine synthase B from Klebsiella pneumoniae.